The primary structure comprises 647 residues: DNA mismatch repair protein MutL (647 aa).

Belongs to the DNA mismatch repair MutL/HexB family.

Functionally, this protein is involved in the repair of mismatches in DNA. It is required for dam-dependent methyl-directed DNA mismatch repair. May act as a 'molecular matchmaker', a protein that promotes the formation of a stable complex between two or more DNA-binding proteins in an ATP-dependent manner without itself being part of a final effector complex. This is DNA mismatch repair protein MutL from Bacillus thuringiensis subsp. konkukian (strain 97-27).